Reading from the N-terminus, the 360-residue chain is Protein MGF 360-1L (360 aa).

The protein belongs to the asfivirus MGF 360 family.

Plays a role in virus cell tropism, and may be required for efficient virus replication in macrophages. The polypeptide is Protein MGF 360-1L (Ornithodoros (relapsing fever ticks)).